The chain runs to 178 residues: Disulfide bond formation protein B (178 aa).

The Cytoplasmic portion of the chain corresponds to 1–16; sequence MTIFSSLNQFSKGHVS. A helical membrane pass occupies residues 17–33; it reads WLLLLLFIIFFEACALY. At 34–51 the chain is on the periplasmic side; the sequence is FQHVMMLAPCVMCIYERV. C43 and C46 are oxidised to a cystine. A helical transmembrane segment spans residues 52 to 67; the sequence is AMMGIGGAAIIGLIAP. Residues 68–74 are Cytoplasmic-facing; it reads NNALFRW. Residues 75-92 traverse the membrane as a helical segment; sequence LGLIGWGLSSYKGLMLAM. Residues 93–147 are Periplasmic-facing; sequence QHVDYQFNPSPFATCDLFVTFPSWAPLNQWVPWMFEAYGDCSKIVWQFFDLSMPQ. C107 and C133 are oxidised to a cystine. The chain crosses the membrane as a helical span at residues 148–166; that stretch reads WLVVIFAGNLVALALIVIA. At 167–178 the chain is on the cytoplasmic side; sequence QFFPVKRKNPIR.

The protein belongs to the DsbB family.

Its subcellular location is the cell inner membrane. Functionally, required for disulfide bond formation in some periplasmic proteins. Acts by oxidizing the DsbA protein. This chain is Disulfide bond formation protein B, found in Vibrio parahaemolyticus serotype O3:K6 (strain RIMD 2210633).